We begin with the raw amino-acid sequence, 67 residues long: Protein SlyX homolog (67 aa).

Residues 48–60 are compositionally biased toward polar residues; it reads TSAPSTAAESNPQ. The interval 48 to 67 is disordered; the sequence is TSAPSTAAESNPQHEIPPHY.

It belongs to the SlyX family.

The protein is Protein SlyX homolog of Cupriavidus pinatubonensis (strain JMP 134 / LMG 1197) (Cupriavidus necator (strain JMP 134)).